We begin with the raw amino-acid sequence, 161 residues long: Ubiquitin-conjugating enzyme E2Q-like protein 1 (161 aa).

The 154-residue stretch at 1–154 (MKELQDIARL…VKTHEKYGWV (154 aa)) folds into the UBC core domain. Residue Cys-88 is the Glycyl thioester intermediate of the active site.

It belongs to the ubiquitin-conjugating enzyme family. Interacts with FBXW7.

Its subcellular location is the nucleus. It catalyses the reaction S-ubiquitinyl-[E1 ubiquitin-activating enzyme]-L-cysteine + [E2 ubiquitin-conjugating enzyme]-L-cysteine = [E1 ubiquitin-activating enzyme]-L-cysteine + S-ubiquitinyl-[E2 ubiquitin-conjugating enzyme]-L-cysteine.. It participates in protein modification; protein ubiquitination. Functionally, probable E2 ubiquitin-protein ligase that catalyzes the covalent attachment of ubiquitin to target proteins. May facilitate the monoubiquitination and degradation of MTOR and CCNE1 through interaction with FBXW7. The polypeptide is Ubiquitin-conjugating enzyme E2Q-like protein 1 (Ube2ql1) (Mus musculus (Mouse)).